A 428-amino-acid chain; its full sequence is Enolase (428 aa).

Residue glutamine 165 coordinates (2R)-2-phosphoglycerate. The active-site Proton donor is the glutamate 207. Residues aspartate 244, glutamate 285, and aspartate 312 each coordinate Mg(2+). Positions 337, 366, 367, and 388 each coordinate (2R)-2-phosphoglycerate. The active-site Proton acceptor is the lysine 337.

The protein belongs to the enolase family. As to quaternary structure, component of the RNA degradosome, a multiprotein complex involved in RNA processing and mRNA degradation. It depends on Mg(2+) as a cofactor.

The protein resides in the cytoplasm. It is found in the secreted. Its subcellular location is the cell surface. It catalyses the reaction (2R)-2-phosphoglycerate = phosphoenolpyruvate + H2O. It functions in the pathway carbohydrate degradation; glycolysis; pyruvate from D-glyceraldehyde 3-phosphate: step 4/5. Catalyzes the reversible conversion of 2-phosphoglycerate (2-PG) into phosphoenolpyruvate (PEP). It is essential for the degradation of carbohydrates via glycolysis. This Coxiella burnetii (strain Dugway 5J108-111) protein is Enolase.